The following is a 700-amino-acid chain: Receptor-type tyrosine-protein phosphatase epsilon (700 aa).

Residues 1–19 form the signal peptide; sequence MEPLCPLLLVGFSLPLARA. At 20 to 46 the chain is on the extracellular side; the sequence is LRGNETTADSNETTTTSGPPDPGASQP. N-linked (GlcNAc...) asparagine glycans are attached at residues Asn-23 and Asn-30. Residues 47–69 traverse the membrane as a helical segment; sequence LLAWLLLPLLLLLLVLLLAAYFF. At 70–700 the chain is on the cytoplasmic side; that stretch reads RFRKQRKAVV…DIFSDYANFK (631 aa). Tyrosine-protein phosphatase domains lie at 135-394 and 426-689; these read FREE…LLEY and LEEE…VQDF. Substrate contacts are provided by residues Asp-303, 335 to 341, and Gln-379; that span reads CSAGVGR. The active-site Phosphocysteine intermediate is Cys-335. Cys-630 acts as the Phosphocysteine intermediate in catalysis. Phosphotyrosine is present on Tyr-696.

The protein belongs to the protein-tyrosine phosphatase family. Receptor class 4 subfamily. In terms of assembly, monomer. Isoform 2: Homodimer. Can form oligomers. Dimerization is increased by oxidative stress and decreased by EGFR. Isoform 2 interacts with GRB2. Post-translationally, a catalytically active cytoplasmic form (p65) is produced by proteolytic cleavage of either isoform 1, isoform 2 or isoform 3. In terms of processing, isoform 1 and isoform 2 are phosphorylated on tyrosine residues by tyrosine kinase Neu. Isoform 1 is glycosylated. Expressed in giant cell tumor (osteoclastoma rich in multinucleated osteoclastic cells).

It localises to the cell membrane. The protein localises to the cytoplasm. It carries out the reaction O-phospho-L-tyrosyl-[protein] + H2O = L-tyrosyl-[protein] + phosphate. In terms of biological role, isoform 1 plays a critical role in signaling transduction pathways and phosphoprotein network topology in red blood cells. May play a role in osteoclast formation and function. Its function is as follows. Isoform 2 acts as a negative regulator of insulin receptor (IR) signaling in skeletal muscle. Regulates insulin-induced tyrosine phosphorylation of insulin receptor (IR) and insulin receptor substrate 1 (IRS-1), phosphorylation of protein kinase B and glycogen synthase kinase-3 and insulin induced stimulation of glucose uptake. Isoform 1 and isoform 2 act as a negative regulator of FceRI-mediated signal transduction leading to cytokine production and degranulation, most likely by acting at the level of SYK to affect downstream events such as phosphorylation of SLP76 and LAT and mobilization of Ca(2+). The polypeptide is Receptor-type tyrosine-protein phosphatase epsilon (PTPRE) (Homo sapiens (Human)).